The following is a 374-amino-acid chain: Chaperone protein DnaJ (374 aa).

The J domain occupies 5–69 (NYYQILGVSK…QKRAAYDRLG (65 aa)). A CR-type zinc finger spans residues 137-215 (GIEKNISFSS…CHGMGRYHKQ (79 aa)). Positions 150, 153, 167, 170, 189, 192, 203, and 206 each coordinate Zn(2+). CXXCXGXG motif repeat units lie at residues 150-157 (CDTCHGSG), 167-174 (CDACSGVG), 189-196 (CHKCQGNG), and 203-210 (CKKCHGMG).

Belongs to the DnaJ family. As to quaternary structure, homodimer. Zn(2+) is required as a cofactor.

Its subcellular location is the cytoplasm. Functionally, participates actively in the response to hyperosmotic and heat shock by preventing the aggregation of stress-denatured proteins and by disaggregating proteins, also in an autonomous, DnaK-independent fashion. Unfolded proteins bind initially to DnaJ; upon interaction with the DnaJ-bound protein, DnaK hydrolyzes its bound ATP, resulting in the formation of a stable complex. GrpE releases ADP from DnaK; ATP binding to DnaK triggers the release of the substrate protein, thus completing the reaction cycle. Several rounds of ATP-dependent interactions between DnaJ, DnaK and GrpE are required for fully efficient folding. Also involved, together with DnaK and GrpE, in the DNA replication of plasmids through activation of initiation proteins. The chain is Chaperone protein DnaJ from Rickettsia massiliae (strain Mtu5).